Reading from the N-terminus, the 227-residue chain is Cytochrome c oxidase subunit 2 (227 aa).

At 1–14 (MAYPFQMGLQDATS) the chain is on the mitochondrial intermembrane side. The chain crosses the membrane as a helical span at residues 15–45 (PIMEELLHFHDHTLMIVFLISSLVLYIISLM). Residues 46-59 (LTTKLTHTSTMDAQ) are Mitochondrial matrix-facing. Residues 60–87 (EVETIWTILPAIILILIALPSLRILYMM) traverse the membrane as a helical segment. Residues 88-227 (DEINNPSLTV…HFEKWSASLL (140 aa)) are Mitochondrial intermembrane-facing. Positions 161, 196, 198, 200, 204, and 207 each coordinate Cu cation. A Mg(2+)-binding site is contributed by glutamate 198.

It belongs to the cytochrome c oxidase subunit 2 family. Component of the cytochrome c oxidase (complex IV, CIV), a multisubunit enzyme composed of 14 subunits. The complex is composed of a catalytic core of 3 subunits MT-CO1, MT-CO2 and MT-CO3, encoded in the mitochondrial DNA, and 11 supernumerary subunits COX4I, COX5A, COX5B, COX6A, COX6B, COX6C, COX7A, COX7B, COX7C, COX8 and NDUFA4, which are encoded in the nuclear genome. The complex exists as a monomer or a dimer and forms supercomplexes (SCs) in the inner mitochondrial membrane with NADH-ubiquinone oxidoreductase (complex I, CI) and ubiquinol-cytochrome c oxidoreductase (cytochrome b-c1 complex, complex III, CIII), resulting in different assemblies (supercomplex SCI(1)III(2)IV(1) and megacomplex MCI(2)III(2)IV(2)). Found in a complex with TMEM177, COA6, COX18, COX20, SCO1 and SCO2. Interacts with TMEM177 in a COX20-dependent manner. Interacts with COX20. Interacts with COX16. The cofactor is Cu cation.

Its subcellular location is the mitochondrion inner membrane. It catalyses the reaction 4 Fe(II)-[cytochrome c] + O2 + 8 H(+)(in) = 4 Fe(III)-[cytochrome c] + 2 H2O + 4 H(+)(out). Functionally, component of the cytochrome c oxidase, the last enzyme in the mitochondrial electron transport chain which drives oxidative phosphorylation. The respiratory chain contains 3 multisubunit complexes succinate dehydrogenase (complex II, CII), ubiquinol-cytochrome c oxidoreductase (cytochrome b-c1 complex, complex III, CIII) and cytochrome c oxidase (complex IV, CIV), that cooperate to transfer electrons derived from NADH and succinate to molecular oxygen, creating an electrochemical gradient over the inner membrane that drives transmembrane transport and the ATP synthase. Cytochrome c oxidase is the component of the respiratory chain that catalyzes the reduction of oxygen to water. Electrons originating from reduced cytochrome c in the intermembrane space (IMS) are transferred via the dinuclear copper A center (CU(A)) of subunit 2 and heme A of subunit 1 to the active site in subunit 1, a binuclear center (BNC) formed by heme A3 and copper B (CU(B)). The BNC reduces molecular oxygen to 2 water molecules using 4 electrons from cytochrome c in the IMS and 4 protons from the mitochondrial matrix. The sequence is that of Cytochrome c oxidase subunit 2 (MT-CO2) from Ailurus fulgens (Himalayan red panda).